The following is a 130-amino-acid chain: D-ribose pyranase (130 aa).

Catalysis depends on His20, which acts as the Proton donor. Residues Asp28, His97, and 119–121 (YAN) contribute to the substrate site.

The protein belongs to the RbsD / FucU family. RbsD subfamily. As to quaternary structure, homodecamer.

It is found in the cytoplasm. The enzyme catalyses beta-D-ribopyranose = beta-D-ribofuranose. The protein operates within carbohydrate metabolism; D-ribose degradation; D-ribose 5-phosphate from beta-D-ribopyranose: step 1/2. Its function is as follows. Catalyzes the interconversion of beta-pyran and beta-furan forms of D-ribose. The chain is D-ribose pyranase from Bacillus pumilus (strain SAFR-032).